A 300-amino-acid chain; its full sequence is Energy-coupling factor transporter ATP-binding protein EcfA2 (300 aa).

The ABC transporter domain occupies 3–258 (IKAKNIVKIY…NKFLIENKML (256 aa)). 40 to 47 (GQTGSGKT) contributes to the ATP binding site.

Belongs to the ABC transporter superfamily. Energy-coupling factor EcfA family. Forms a stable energy-coupling factor (ECF) transporter complex composed of 2 membrane-embedded substrate-binding proteins (S component), 2 ATP-binding proteins (A component) and 2 transmembrane proteins (T component).

The protein resides in the cell membrane. Its function is as follows. ATP-binding (A) component of a common energy-coupling factor (ECF) ABC-transporter complex. Unlike classic ABC transporters this ECF transporter provides the energy necessary to transport a number of different substrates. The polypeptide is Energy-coupling factor transporter ATP-binding protein EcfA2 (Mesomycoplasma hyopneumoniae (strain 232) (Mycoplasma hyopneumoniae)).